Consider the following 660-residue polypeptide: Methionine--tRNA ligase (660 aa).

Positions 15–25 (YYPSDKLHIGH) match the 'HIGH' region motif. The 'KMSKS' region motif lies at 311–315 (KMSKS). K314 is an ATP binding site. The interval 535-554 (LMGGSKKPEEAPKDEKEESD) is disordered. Residues 540–550 (KKPEEAPKDEK) show a composition bias toward basic and acidic residues. The 101-residue stretch at 560–660 (DFSKVELRIA…GALPNGSLVK (101 aa)) folds into the tRNA-binding domain.

The protein belongs to the class-I aminoacyl-tRNA synthetase family. MetG type 2B subfamily. Homodimer.

The protein resides in the cytoplasm. The enzyme catalyses tRNA(Met) + L-methionine + ATP = L-methionyl-tRNA(Met) + AMP + diphosphate. Functionally, is required not only for elongation of protein synthesis but also for the initiation of all mRNA translation through initiator tRNA(fMet) aminoacylation. The protein is Methionine--tRNA ligase (metG) of Halalkalibacterium halodurans (strain ATCC BAA-125 / DSM 18197 / FERM 7344 / JCM 9153 / C-125) (Bacillus halodurans).